Reading from the N-terminus, the 127-residue chain is NADPH-dependent 7-cyano-7-deazaguanine reductase (127 aa).

Catalysis depends on C40, which acts as the Thioimide intermediate. D47 acts as the Proton donor in catalysis. Residues 62 to 64 (VEL) and 81 to 82 (HE) each bind substrate.

Belongs to the GTP cyclohydrolase I family. QueF type 1 subfamily.

Its subcellular location is the cytoplasm. It catalyses the reaction 7-aminomethyl-7-carbaguanine + 2 NADP(+) = 7-cyano-7-deazaguanine + 2 NADPH + 3 H(+). Its pathway is tRNA modification; tRNA-queuosine biosynthesis. Functionally, catalyzes the NADPH-dependent reduction of 7-cyano-7-deazaguanine (preQ0) to 7-aminomethyl-7-deazaguanine (preQ1). In Campylobacter jejuni subsp. jejuni serotype O:6 (strain 81116 / NCTC 11828), this protein is NADPH-dependent 7-cyano-7-deazaguanine reductase.